The sequence spans 166 residues: Urocortin-3 (166 aa).

Residues 1–23 (MLVPAPFLLVLLLLLGAPQVGLS) form the signal peptide. A propeptide spanning residues 24–123 (QRSPKAGSSP…QDKAKSDRRT (100 aa)) is cleaved from the precursor. Residues 41–51 (REAEKSQRKDT) are compositionally biased toward basic and acidic residues. Residues 41-123 (REAEKSQRKD…QDKAKSDRRT (83 aa)) form a disordered region. Residues 68-77 (EDQEGQEEED) are compositionally biased toward acidic residues. Residues 86–96 (SVGGGGGGGAG) are compositionally biased toward gly residues. The segment covering 113–123 (SQDKAKSDRRT) has biased composition (basic and acidic residues). An Isoleucine amide modification is found at isoleucine 162.

Belongs to the sauvagine/corticotropin-releasing factor/urotensin I family. In terms of assembly, binds with high affinity to CRF receptors 2-alpha and 2-beta.

It is found in the secreted. Functionally, suppresses food intake, delays gastric emptying and decreases heat-induced edema. Might represent an endogenous ligand for maintaining homeostasis after stress. The sequence is that of Urocortin-3 (UCN3) from Bos taurus (Bovine).